A 544-amino-acid chain; its full sequence is Chaperonin GroEL 2 (544 aa).

ATP is bound by residues 29–32 (TLGP), 86–90 (DGTTT), Gly413, 479–481 (NAA), and Asp495.

Belongs to the chaperonin (HSP60) family. In terms of assembly, forms a cylinder of 14 subunits composed of two heptameric rings stacked back-to-back. Interacts with the co-chaperonin GroES.

The protein resides in the cytoplasm. It carries out the reaction ATP + H2O + a folded polypeptide = ADP + phosphate + an unfolded polypeptide.. Its function is as follows. Together with its co-chaperonin GroES, plays an essential role in assisting protein folding. The GroEL-GroES system forms a nano-cage that allows encapsulation of the non-native substrate proteins and provides a physical environment optimized to promote and accelerate protein folding. In Trichodesmium erythraeum (strain IMS101), this protein is Chaperonin GroEL 2.